The primary structure comprises 144 residues: UPF0102 protein BURPS1106A_3900 (144 aa).

A disordered region spans residues 1 to 28; sequence MCHAREASPGTGEPEAAPRDNFPRAAGS.

Belongs to the UPF0102 family.

The chain is UPF0102 protein BURPS1106A_3900 from Burkholderia pseudomallei (strain 1106a).